Reading from the N-terminus, the 162-residue chain is Anaerobic nitrite reductase NSHB2 (162 aa).

Positions 16–159 (SFSEEQEALV…LVAAIKQEMK (144 aa)) constitute a Globin domain. The Homodimerization signature appears at 49–53 (EVAPS). Ser-59, Lys-73, His-77, Arg-100, Thr-104, and His-105 together coordinate heme b. Residues 112–124 (DAHFEVTRFALLE) carry the Homodimerization motif.

Belongs to the plant globin family. In terms of assembly, homodimer. Heme b serves as cofactor. Mainly expressed in germinating seeds, seedlings, roots, flowers and leaves.

Its subcellular location is the cytoplasm. The protein localises to the nucleus. The enzyme catalyses Fe(III)-heme b-[protein] + nitric oxide + H2O = Fe(II)-heme b-[protein] + nitrite + 2 H(+). Functionally, phytoglobin that reduces nitrite to nitric oxide under anoxic conditions (e.g. during flooding or in waterlogged soil). May not function as an oxygen storage or transport protein. Has an unusually high affinity for O(2) through an hexacoordinate heme iron because of a very low dissociation constant. Promotes tolerance to low potassium K(+) conditions. This chain is Anaerobic nitrite reductase NSHB2, found in Oryza sativa subsp. indica (Rice).